A 200-amino-acid chain; its full sequence is Dephospho-CoA kinase (200 aa).

The 197-residue stretch at 4–200 (VIGLTGGIAS…AILKKWNIID (197 aa)) folds into the DPCK domain. 12 to 17 (ASGKST) provides a ligand contact to ATP.

Belongs to the CoaE family.

It is found in the cytoplasm. The catalysed reaction is 3'-dephospho-CoA + ATP = ADP + CoA + H(+). It functions in the pathway cofactor biosynthesis; coenzyme A biosynthesis; CoA from (R)-pantothenate: step 5/5. In terms of biological role, catalyzes the phosphorylation of the 3'-hydroxyl group of dephosphocoenzyme A to form coenzyme A. The polypeptide is Dephospho-CoA kinase (Bacillus cereus (strain ZK / E33L)).